The sequence spans 31 residues: Photosystem II reaction center protein T (31 aa).

The helical transmembrane segment at 3 to 23 (ALVYVFLLVGTLMVIFFAIFF) threads the bilayer.

The protein belongs to the PsbT family. PSII is composed of 1 copy each of membrane proteins PsbA, PsbB, PsbC, PsbD, PsbE, PsbF, PsbH, PsbI, PsbJ, PsbK, PsbL, PsbM, PsbT, PsbX, PsbY, PsbZ, Psb30/Ycf12, at least 3 peripheral proteins of the oxygen-evolving complex and a large number of cofactors. It forms dimeric complexes.

It localises to the plastid. Its subcellular location is the chloroplast thylakoid membrane. Found at the monomer-monomer interface of the photosystem II (PS II) dimer, plays a role in assembly and dimerization of PSII. PSII is a light-driven water plastoquinone oxidoreductase, using light energy to abstract electrons from H(2)O, generating a proton gradient subsequently used for ATP formation. The sequence is that of Photosystem II reaction center protein T from Gracilaria tenuistipitata var. liui (Red alga).